Reading from the N-terminus, the 609-residue chain is tRNA uridine 5-carboxymethylaminomethyl modification enzyme MnmG (609 aa).

Residues 11 to 16 (GAGHAG), Val-123, and Thr-178 each bind FAD. 270–284 (GPRYCPSIEDKVVRF) serves as a coordination point for NAD(+). Residue Gln-367 participates in FAD binding.

This sequence belongs to the MnmG family. Homodimer. Heterotetramer of two MnmE and two MnmG subunits. Requires FAD as cofactor.

The protein localises to the cytoplasm. NAD-binding protein involved in the addition of a carboxymethylaminomethyl (cmnm) group at the wobble position (U34) of certain tRNAs, forming tRNA-cmnm(5)s(2)U34. This chain is tRNA uridine 5-carboxymethylaminomethyl modification enzyme MnmG, found in Mycoplasmopsis synoviae (strain 53) (Mycoplasma synoviae).